Reading from the N-terminus, the 558-residue chain is uncharacterized protein (558 aa).

6 consecutive transmembrane segments (helical) span residues 63-83 (LTGI…PSIY), 90-110 (VTFG…TYWI), 143-163 (VAAV…TLYG), 168-188 (VFVT…ATNC), 226-246 (SLGS…VLLV), and 258-278 (VLIL…ILAW). One can recognise an HAMP domain in the interval 279 to 330 (LTAAPVRVVRAALKRVEQGDLRGDLVVFDGTELGELQRGFNAMVNGLRERER). The Guanylate cyclase domain maps to 362–486 (AVVFVDIVGS…KPVNQAARLC (125 aa)). Residues 529-558 (TQLASPHRRPPGSIHLTAEHAEEIRTDRLG) are disordered. Positions 545 to 558 (TAEHAEEIRTDRLG) are enriched in basic and acidic residues.

Belongs to the adenylyl cyclase class-3 family.

Its subcellular location is the cell membrane. This is an uncharacterized protein from Mycobacterium tuberculosis (strain CDC 1551 / Oshkosh).